A 100-amino-acid polypeptide reads, in one-letter code: NADH-quinone oxidoreductase subunit K (100 aa).

The next 3 membrane-spanning stretches (helical) occupy residues 4 to 24 (LQHG…GLVI), 28 to 48 (LLFM…AFVV), and 60 to 80 (VMYI…LALL).

Belongs to the complex I subunit 4L family. NDH-1 is composed of 13 different subunits. Subunits NuoA, H, J, K, L, M, N constitute the membrane sector of the complex.

Its subcellular location is the cell inner membrane. It carries out the reaction a quinone + NADH + 5 H(+)(in) = a quinol + NAD(+) + 4 H(+)(out). Its function is as follows. NDH-1 shuttles electrons from NADH, via FMN and iron-sulfur (Fe-S) centers, to quinones in the respiratory chain. The immediate electron acceptor for the enzyme in this species is believed to be ubiquinone. Couples the redox reaction to proton translocation (for every two electrons transferred, four hydrogen ions are translocated across the cytoplasmic membrane), and thus conserves the redox energy in a proton gradient. The polypeptide is NADH-quinone oxidoreductase subunit K (Shigella boydii serotype 18 (strain CDC 3083-94 / BS512)).